Consider the following 162-residue polypeptide: Ribonuclease H (162 aa).

The region spanning 1–141 (MKRIEIFTDG…ADALARAGMA (141 aa)) is the RNase H type-1 domain. Mg(2+)-binding residues include aspartate 9, glutamate 47, aspartate 69, and aspartate 133. Positions 139-162 (GMAPFKKKKGGDTASSEEGSARRR) are disordered.

It belongs to the RNase H family. In terms of assembly, monomer. The cofactor is Mg(2+).

The protein resides in the cytoplasm. The enzyme catalyses Endonucleolytic cleavage to 5'-phosphomonoester.. Endonuclease that specifically degrades the RNA of RNA-DNA hybrids. This Chelativorans sp. (strain BNC1) protein is Ribonuclease H.